We begin with the raw amino-acid sequence, 359 residues long: Peptide chain release factor 1 (359 aa).

At Gln-235 the chain carries N5-methylglutamine.

The protein belongs to the prokaryotic/mitochondrial release factor family. Post-translationally, methylated by PrmC. Methylation increases the termination efficiency of RF1.

The protein localises to the cytoplasm. In terms of biological role, peptide chain release factor 1 directs the termination of translation in response to the peptide chain termination codons UAG and UAA. The chain is Peptide chain release factor 1 from Anaplasma marginale (strain Florida).